A 247-amino-acid chain; its full sequence is MSTTVLFEHPLNEKMRTWLRIEFLLKQLSASQIIVDHQGALTFFRNAGELLDVFERGELRTEILKELERQQQKLLSWAEVPGVDMTQIEMHRAKLKGCATSLIAAPRMGQLLREERLISLVRQRLSIPGGCCSFDLPTLHIWLHIEQQLRDQQVAVWLDSLAPIRDALMLLLALIRQSGILRTHTSLNGFFQDNAEGADLLRLQLRLEDALYPQVSGHKSRYAIRFLPLDSERGEVPARFNFELACC.

Belongs to the ZapD family. In terms of assembly, interacts with FtsZ.

It is found in the cytoplasm. Functionally, cell division factor that enhances FtsZ-ring assembly. Directly interacts with FtsZ and promotes bundling of FtsZ protofilaments, with a reduction in FtsZ GTPase activity. The protein is Cell division protein ZapD of Erwinia tasmaniensis (strain DSM 17950 / CFBP 7177 / CIP 109463 / NCPPB 4357 / Et1/99).